Here is a 981-residue protein sequence, read N- to C-terminus: Peroxisomal ATPase PEX6 (981 aa).

Position 119 is an omega-N-methylarginine (arginine 119). Residues 471–478 (GPPGSGKT) and 745–752 (GPPGTGKT) each bind ATP.

Belongs to the AAA ATPase family. Interacts with PEX1; forming the PEX1-PEX6 AAA ATPase complex, which is composed of a heterohexamer formed by a trimer of PEX1-PEX6 dimers. Interacts with PEX26; interaction is direct and promotes recruitment to peroxisomal membranes. Interacts with ZFAND6. In terms of tissue distribution, in the teeth, expressed in ameloblasts and odontoblasts. Expressed in the retina, at higher levels in the ganglion cell layer and photoreceptor layer at the joint between the outer and inner segments.

It is found in the cytoplasm. The protein resides in the cytosol. The protein localises to the peroxisome membrane. Its subcellular location is the cell projection. It localises to the cilium. It is found in the photoreceptor outer segment. The enzyme catalyses ATP + H2O = ADP + phosphate + H(+). Functionally, component of the PEX1-PEX6 AAA ATPase complex, a protein dislocase complex that mediates the ATP-dependent extraction of the PEX5 receptor from peroxisomal membranes, an essential step for PEX5 recycling. Specifically recognizes PEX5 monoubiquitinated at 'Cys-11', and pulls it out of the peroxisome lumen through the PEX2-PEX10-PEX12 retrotranslocation channel. Extraction by the PEX1-PEX6 AAA ATPase complex is accompanied by unfolding of the TPR repeats and release of bound cargo from PEX5. The chain is Peroxisomal ATPase PEX6 from Mus musculus (Mouse).